The primary structure comprises 655 residues: ATP-dependent RNA helicase mss116, mitochondrial (655 aa).

The N-terminal 56 residues, 1-56 (MMLGAVRRYGVVHALRASVPRTICRPSNSQLLRCQTSPVTACPQSVRLLHKSSPFF), are a transit peptide targeting the mitochondrion. Positions 84 to 113 (DLAERGLVDPKIIRAIVKDMNIKTMTDVQS) match the Q motif motif. A Helicase ATP-binding domain is found at 116 to 307 (LREILQGDDV…RKTMKPNFKF (192 aa)). ATP is bound at residue 129–136 (AKTGTGKT). The DEAD box signature appears at 251 to 254 (DEAD). The Helicase C-terminal domain maps to 341-503 (EFVTKYVEGE…TFATATVDMT (163 aa)). A disordered region spans residues 594–642 (YRGSSDNMSTRPDYRGGDRDMWASNSRRGREFNSDRRESRFGNHRNADD). Basic and acidic residues-rich tracts occupy residues 605–614 (PDYRGGDRDM) and 621–642 (RGRE…NADD).

It belongs to the DEAD box helicase family. DDX18/HAS1 subfamily.

The protein resides in the mitochondrion matrix. It carries out the reaction ATP + H2O = ADP + phosphate + H(+). Its function is as follows. ATP-dependent RNA helicase required for mitochondrial splicing of group I and II introns. Also required for efficient mitochondrial translation. This is ATP-dependent RNA helicase mss116, mitochondrial (mss116) from Aspergillus fumigatus (strain ATCC MYA-4609 / CBS 101355 / FGSC A1100 / Af293) (Neosartorya fumigata).